We begin with the raw amino-acid sequence, 216 residues long: Pyrrolidone-carboxylate peptidase (216 aa).

Active-site residues include E80, C143, and H168.

This sequence belongs to the peptidase C15 family. As to quaternary structure, homotetramer.

The protein resides in the cytoplasm. It carries out the reaction Release of an N-terminal pyroglutamyl group from a polypeptide, the second amino acid generally not being Pro.. Functionally, removes 5-oxoproline from various penultimate amino acid residues except L-proline. The chain is Pyrrolidone-carboxylate peptidase from Cupriavidus taiwanensis (strain DSM 17343 / BCRC 17206 / CCUG 44338 / CIP 107171 / LMG 19424 / R1) (Ralstonia taiwanensis (strain LMG 19424)).